A 635-amino-acid polypeptide reads, in one-letter code: Cytoplasmic polyadenylation element-binding protein 4 (635 aa).

Disordered regions lie at residues 1–70 (MQDD…TLRL), 149–284 (GFGG…GFNT), and 337–369 (LFPM…PHQN). Over residues 14 to 30 (PQLQQESQEGQDKQTLS) the composition is skewed to polar residues. The segment covering 166–182 (PSPHPHFQHPHNQHRRS) has biased composition (basic residues). The segment covering 216-231 (GSYQSPSSTPSSTSWS) has biased composition (low complexity). Residues 232-241 (PGGGYGGWGS) are compositionally biased toward gly residues. A compositionally biased stretch (polar residues) spans 254–283 (PLNSISPLKKSFPNNQTQTQKYPRNNSGFN). Positions 341–353 (EDERSYGEDERSD) are enriched in basic and acidic residues. RRM domains follow at residues 378 to 469 (RKVF…PWNL) and 486 to 568 (KTIF…PYVL).

This sequence belongs to the RRM CPEB family.

It localises to the cytoplasm. The protein localises to the cell projection. Its subcellular location is the dendrite. It is found in the dendritic spine. The protein resides in the postsynaptic density. It localises to the axon. The protein localises to the growth cone. Its subcellular location is the endoplasmic reticulum. It is found in the perinuclear region. Its function is as follows. Sequence-specific RNA-binding protein that binds to the cytoplasmic polyadenylation element (CPE), an uridine-rich sequence element (consensus sequence 5'-UUUUUAU-3') within the mRNA 3'-UTR. RNA binding results in a clear conformational change analogous to the Venus fly trap mechanism. This Danio rerio (Zebrafish) protein is Cytoplasmic polyadenylation element-binding protein 4 (cpeb4).